Consider the following 169-residue polypeptide: Ribosome maturation factor RimM (169 aa).

The region spanning Pro97–Phe169 is the PRC barrel domain.

It belongs to the RimM family. Binds ribosomal protein uS19.

The protein resides in the cytoplasm. An accessory protein needed during the final step in the assembly of 30S ribosomal subunit, possibly for assembly of the head region. Essential for efficient processing of 16S rRNA. May be needed both before and after RbfA during the maturation of 16S rRNA. It has affinity for free ribosomal 30S subunits but not for 70S ribosomes. In Legionella pneumophila (strain Paris), this protein is Ribosome maturation factor RimM.